The sequence spans 227 residues: Charged multivesicular body protein 4c (227 aa).

The disordered stretch occupies residues 1 to 27 (MSKITKLFKSSGGSGSSSKNRKGPSAQ). 2 coiled-coil regions span residues 32-94 (KLRE…STIE) and 129-187 (LEKI…MANV). The segment at 178–227 (EDLNSQMANVNLPSVPSSKLPSTKLPSRPASSRKKVEDDDDMQMLAAWAT) is disordered. Low complexity predominate over residues 189-206 (LPSVPSSKLPSTKLPSRP).

It belongs to the SNF7 family. As to quaternary structure, probable core component of the endosomal sorting required for transport complex III (ESCRT-III). ESCRT-III components are thought to multimerize to form a flat lattice on the perimeter membrane of the endosome.

It localises to the cytoplasm. Its subcellular location is the cytosol. It is found in the late endosome membrane. Its function is as follows. Probable core component of the endosomal sorting required for transport complex III (ESCRT-III) which is involved in multivesicular bodies (MVBs) formation and sorting of endosomal cargo proteins into MVBs. MVBs contain intraluminal vesicles (ILVs) that are generated by invagination and scission from the limiting membrane of the endosome and mostly are delivered to lysosomes enabling degradation of membrane proteins, such as stimulated growth factor receptors, lysosomal enzymes and lipids. Key component of the cytokinesis checkpoint, a process required to delay abscission to prevent both premature resolution of intercellular chromosome bridges and accumulation of DNA damage. In Xenopus laevis (African clawed frog), this protein is Charged multivesicular body protein 4c (chmp4c).